Consider the following 299-residue polypeptide: Acetaldehyde dehydrogenase 6 (299 aa).

The active-site Acyl-thioester intermediate is Cys125. NAD(+)-binding positions include 156–164 (GAGPGTRAN) and Asn275.

This sequence belongs to the acetaldehyde dehydrogenase family.

It catalyses the reaction acetaldehyde + NAD(+) + CoA = acetyl-CoA + NADH + H(+). The chain is Acetaldehyde dehydrogenase 6 (hpdG) from Rhodococcus jostii (strain RHA1).